Here is a 538-residue protein sequence, read N- to C-terminus: Carboxypeptidase 2 (538 aa).

The N-terminal stretch at 1–21 (MVAYRFLTLISLGLGSHCVSA) is a signal peptide. Asn-46 carries N-linked (GlcNAc...) asparagine glycosylation. A disordered region spans residues 53-76 (PAFTSPGTVSRGFSDGTSGPTRDE). In terms of domain architecture, Peptidase M14 spans 71 to 351 (GPTRDETMEG…VMAKSVLQTA (281 aa)). 3 residues coordinate Zn(2+): His-136, Glu-139, and His-224. The active-site Proton donor/acceptor is the Glu-322. Asn-393 and Asn-459 each carry an N-linked (GlcNAc...) asparagine glycan.

It belongs to the peptidase M14 family. Zn(2+) is required as a cofactor.

Its subcellular location is the secreted. In terms of biological role, extracellular metalloprotease that contributes to pathogenicity. The sequence is that of Carboxypeptidase 2 (MCPB) from Trichophyton rubrum (Athlete's foot fungus).